A 360-amino-acid chain; its full sequence is Phenylalanine--tRNA ligase alpha subunit (360 aa).

E260 provides a ligand contact to Mg(2+).

It belongs to the class-II aminoacyl-tRNA synthetase family. Phe-tRNA synthetase alpha subunit type 1 subfamily. Tetramer of two alpha and two beta subunits. Mg(2+) serves as cofactor.

It is found in the cytoplasm. It catalyses the reaction tRNA(Phe) + L-phenylalanine + ATP = L-phenylalanyl-tRNA(Phe) + AMP + diphosphate + H(+). This chain is Phenylalanine--tRNA ligase alpha subunit, found in Methylocella silvestris (strain DSM 15510 / CIP 108128 / LMG 27833 / NCIMB 13906 / BL2).